The chain runs to 1041 residues: DNA polymerase catalytic subunit (1041 aa).

The disordered stretch occupies residues 1–23 (MAFFNPYFKSKNKGSDMPPKQSM).

Belongs to the DNA polymerase type-B family.

It localises to the host nucleus. It carries out the reaction DNA(n) + a 2'-deoxyribonucleoside 5'-triphosphate = DNA(n+1) + diphosphate. The catalysed reaction is Endonucleolytic cleavage to 5'-phosphomonoester.. Its function is as follows. Replicates viral genomic DNA. The replication complex is composed of six viral proteins: the DNA polymerase, processivity factor, primase, primase-associated factor, helicase, and ssDNA-binding protein. Additionally, the polymerase contains an intrinsic ribonuclease H (RNase H) activity that specifically degrades RNA/DNA heteroduplexes or duplex DNA substrates in the 5' to 3' direction. Therefore, it can catalyze the excision of the RNA primers that initiate the synthesis of Okazaki fragments at a replication fork during viral DNA replication. The chain is DNA polymerase catalytic subunit from Elephantid herpesvirus 1 (isolate Asian elephant/Berlin/Kiba/1998) (EIHV-1).